A 79-amino-acid chain; its full sequence is D-alanyl carrier protein (79 aa).

In terms of domain architecture, Carrier spans 1-77 (MDVKAEVIEI…KIVEGVTELR (77 aa)). The residue at position 35 (S35) is an O-(pantetheine 4'-phosphoryl)serine.

It belongs to the DltC family. Post-translationally, 4'-phosphopantetheine is transferred from CoA to a specific serine of apo-DCP.

The protein localises to the cytoplasm. It functions in the pathway cell wall biogenesis; lipoteichoic acid biosynthesis. Functionally, carrier protein involved in the D-alanylation of lipoteichoic acid (LTA). The loading of thioester-linked D-alanine onto DltC is catalyzed by D-alanine--D-alanyl carrier protein ligase DltA. The DltC-carried D-alanyl group is further transferred to cell membrane phosphatidylglycerol (PG) by forming an ester bond, probably catalyzed by DltD. D-alanylation of LTA plays an important role in modulating the properties of the cell wall in Gram-positive bacteria, influencing the net charge of the cell wall. This chain is D-alanyl carrier protein, found in Streptococcus thermophilus (strain CNRZ 1066).